Reading from the N-terminus, the 544-residue chain is Peptide chain release factor 3 (544 aa).

A tr-type G domain is found at 17–286 (EKRRNFAIIS…SFLDYGLAPR (270 aa)). GTP contacts are provided by residues 26–33 (SHPDAGKT), 94–98 (DTPGH), and 148–151 (NKMD).

This sequence belongs to the TRAFAC class translation factor GTPase superfamily. Classic translation factor GTPase family. PrfC subfamily.

The protein localises to the cytoplasm. In terms of biological role, increases the formation of ribosomal termination complexes and stimulates activities of RF-1 and RF-2. It binds guanine nucleotides and has strong preference for UGA stop codons. It may interact directly with the ribosome. The stimulation of RF-1 and RF-2 is significantly reduced by GTP and GDP, but not by GMP. The protein is Peptide chain release factor 3 of Microcystis aeruginosa (strain NIES-843 / IAM M-2473).